Here is a 177-residue protein sequence, read N- to C-terminus: Large ribosomal subunit protein uL6 (177 aa).

Belongs to the universal ribosomal protein uL6 family. In terms of assembly, part of the 50S ribosomal subunit.

This protein binds to the 23S rRNA, and is important in its secondary structure. It is located near the subunit interface in the base of the L7/L12 stalk, and near the tRNA binding site of the peptidyltransferase center. The protein is Large ribosomal subunit protein uL6 of Rhodospirillum rubrum (strain ATCC 11170 / ATH 1.1.1 / DSM 467 / LMG 4362 / NCIMB 8255 / S1).